Consider the following 100-residue polypeptide: Large ribosomal subunit protein bL21 (100 aa).

This sequence belongs to the bacterial ribosomal protein bL21 family. As to quaternary structure, part of the 50S ribosomal subunit. Contacts protein L20.

In terms of biological role, this protein binds to 23S rRNA in the presence of protein L20. In Mycoplasmopsis synoviae (strain 53) (Mycoplasma synoviae), this protein is Large ribosomal subunit protein bL21.